The chain runs to 211 residues: N-(5'-phosphoribosyl)anthranilate isomerase (211 aa).

The protein belongs to the TrpF family.

It carries out the reaction N-(5-phospho-beta-D-ribosyl)anthranilate = 1-(2-carboxyphenylamino)-1-deoxy-D-ribulose 5-phosphate. The protein operates within amino-acid biosynthesis; L-tryptophan biosynthesis; L-tryptophan from chorismate: step 3/5. The sequence is that of N-(5'-phosphoribosyl)anthranilate isomerase from Chromohalobacter salexigens (strain ATCC BAA-138 / DSM 3043 / CIP 106854 / NCIMB 13768 / 1H11).